The chain runs to 84 residues: Large ribosomal subunit protein bL27 (84 aa).

The disordered stretch occupies residues 1 to 25; that stretch reads MAHKKAGGSSRNGRDSNGQRRGVKR.

The protein belongs to the bacterial ribosomal protein bL27 family.

The chain is Large ribosomal subunit protein bL27 from Desulfatibacillum aliphaticivorans.